The primary structure comprises 184 residues: NADH-quinone oxidoreductase subunit B 1 (184 aa).

Cysteine 37, cysteine 38, cysteine 103, and cysteine 132 together coordinate [4Fe-4S] cluster.

Belongs to the complex I 20 kDa subunit family. As to quaternary structure, NDH-1 is composed of 14 different subunits. Subunits NuoB, C, D, E, F, and G constitute the peripheral sector of the complex. The cofactor is [4Fe-4S] cluster.

It is found in the cell membrane. It catalyses the reaction a quinone + NADH + 5 H(+)(in) = a quinol + NAD(+) + 4 H(+)(out). Its function is as follows. NDH-1 shuttles electrons from NADH, via FMN and iron-sulfur (Fe-S) centers, to quinones in the respiratory chain. The immediate electron acceptor for the enzyme in this species is believed to be a menaquinone. Couples the redox reaction to proton translocation (for every two electrons transferred, four hydrogen ions are translocated across the cytoplasmic membrane), and thus conserves the redox energy in a proton gradient. This is NADH-quinone oxidoreductase subunit B 1 from Streptomyces coelicolor (strain ATCC BAA-471 / A3(2) / M145).